The sequence spans 36 residues: Photosystem II reaction center protein M (36 aa).

Residues 7–27 (GFVASLMFVLVPTVFLIVLFI) traverse the membrane as a helical segment.

Belongs to the PsbM family. As to quaternary structure, PSII is composed of 1 copy each of membrane proteins PsbA, PsbB, PsbC, PsbD, PsbE, PsbF, PsbH, PsbI, PsbJ, PsbK, PsbL, PsbM, PsbT, PsbX, PsbY, PsbZ, Psb30/Ycf12, peripheral proteins PsbO, CyanoQ (PsbQ), PsbU, PsbV and a large number of cofactors. It forms dimeric complexes.

It is found in the cellular thylakoid membrane. One of the components of the core complex of photosystem II (PSII). PSII is a light-driven water:plastoquinone oxidoreductase that uses light energy to abstract electrons from H(2)O, generating O(2) and a proton gradient subsequently used for ATP formation. It consists of a core antenna complex that captures photons, and an electron transfer chain that converts photonic excitation into a charge separation. This subunit is found at the monomer-monomer interface. This is Photosystem II reaction center protein M from Synechococcus sp. (strain CC9311).